The primary structure comprises 709 residues: Catalase HPII (709 aa).

Residues methionine 1–lysine 26 are compositionally biased toward polar residues. Positions methionine 1 to alanine 32 are disordered. Catalysis depends on residues histidine 90 and asparagine 163. Position 377 (tyrosine 377) interacts with heme. The interval arginine 419–glycine 443 is disordered.

This sequence belongs to the catalase family. HPII subfamily. The cofactor is heme.

It is found in the cytoplasm. The catalysed reaction is 2 H2O2 = O2 + 2 H2O. Functionally, decomposes hydrogen peroxide into water and oxygen; serves to protect cells from the toxic effects of hydrogen peroxide. The sequence is that of Catalase HPII (katE) from Pseudomonas aeruginosa (strain ATCC 15692 / DSM 22644 / CIP 104116 / JCM 14847 / LMG 12228 / 1C / PRS 101 / PAO1).